The sequence spans 155 residues: Ribosomal RNA large subunit methyltransferase H (155 aa).

S-adenosyl-L-methionine contacts are provided by residues leucine 73, glycine 104, and 123 to 128 (LSALTL).

Belongs to the RNA methyltransferase RlmH family. In terms of assembly, homodimer.

The protein localises to the cytoplasm. The enzyme catalyses pseudouridine(1915) in 23S rRNA + S-adenosyl-L-methionine = N(3)-methylpseudouridine(1915) in 23S rRNA + S-adenosyl-L-homocysteine + H(+). Its function is as follows. Specifically methylates the pseudouridine at position 1915 (m3Psi1915) in 23S rRNA. This Saccharophagus degradans (strain 2-40 / ATCC 43961 / DSM 17024) protein is Ribosomal RNA large subunit methyltransferase H.